We begin with the raw amino-acid sequence, 106 residues long: Phosphoribosyl-ATP pyrophosphatase (106 aa).

The protein belongs to the PRA-PH family.

The protein resides in the cytoplasm. The enzyme catalyses 1-(5-phospho-beta-D-ribosyl)-ATP + H2O = 1-(5-phospho-beta-D-ribosyl)-5'-AMP + diphosphate + H(+). It functions in the pathway amino-acid biosynthesis; L-histidine biosynthesis; L-histidine from 5-phospho-alpha-D-ribose 1-diphosphate: step 2/9. This chain is Phosphoribosyl-ATP pyrophosphatase, found in Limosilactobacillus fermentum (strain NBRC 3956 / LMG 18251) (Lactobacillus fermentum).